The chain runs to 203 residues: Outer-membrane lipoprotein carrier protein (203 aa).

The first 20 residues, 1 to 20 (MRRGRVWLAALCLAAGAAHA), serve as a signal peptide directing secretion.

Belongs to the LolA family. As to quaternary structure, monomer.

It localises to the periplasm. Functionally, participates in the translocation of lipoproteins from the inner membrane to the outer membrane. Only forms a complex with a lipoprotein if the residue after the N-terminal Cys is not an aspartate (The Asp acts as a targeting signal to indicate that the lipoprotein should stay in the inner membrane). The protein is Outer-membrane lipoprotein carrier protein of Methylibium petroleiphilum (strain ATCC BAA-1232 / LMG 22953 / PM1).